The chain runs to 70 residues: Alpha-conotoxin EIIB (70 aa).

The signal sequence occupies residues 1–21; it reads MGMRMMFIVFLLVVLATTVVS. Residues 22-51 constitute a propeptide that is removed on maturation; that stretch reads FTLDHVLGLASEGRNAKAIDNALDQRDPKR. Residue glutamine 52 is modified to Pyrrolidone carboxylic acid. Position 54 is a hydroxyproline (proline 54). 2 disulfides stabilise this stretch: cysteine 56/cysteine 62 and cysteine 57/cysteine 67. Cysteine amide is present on cysteine 67.

Expressed by the venom duct.

Its subcellular location is the secreted. In terms of biological role, alpha-conotoxins bind to the nicotinic acetylcholine receptors (nAChR) and inhibit them. This peptide potently blocks muscular nicotinic acetylcholine receptor (CHRNA1-CHRNB1-CHRNG-CHRND), and has no effect on neuronal receptors. It is able to totally displace [125I]-Bgtx from the Torpedo receptor with an inhibition constant (Ki) of 2.2 and 0.7 nM. This chain is Alpha-conotoxin EIIB, found in Conus ermineus (Agate cone).